We begin with the raw amino-acid sequence, 137 residues long: Flagellar basal body rod protein FlgB (137 aa).

This sequence belongs to the flagella basal body rod proteins family. The basal body constitutes a major portion of the flagellar organelle and consists of a number of rings mounted on a central rod. In Gram-negative bacteria, at least four rings, L, P, S and M are present, whereas Gram-positive bacteria lack the L and P rings. The rod consists of about 26 subunits of FlgG in the distal portion, and FlgB, FlgC and FlgF build up the proximal portion of the rod with about 6 subunits each. Rod assembly occurs by export via the flagellum-specific pathway of its constituent proteins and by their incorporation into the rod structure in the probable order of FlgB, FlgC, FlgF and FlgG. Another protein, FliE, also assembles onto the stable rod structure.

It is found in the bacterial flagellum basal body. Structural component of flagellum, the bacterial motility apparatus. Part of the rod structure of flagellar basal body. The protein is Flagellar basal body rod protein FlgB of Yersinia ruckeri.